We begin with the raw amino-acid sequence, 95 residues long: Small integral membrane protein 18 (95 aa).

A helical transmembrane segment spans residues 35–55 (CFVILLLFIFTVVSLVVLAFL).

It localises to the membrane. The sequence is that of Small integral membrane protein 18 (SMIM18) from Homo sapiens (Human).